The following is a 63-amino-acid chain: Large ribosomal subunit protein uL29 (63 aa).

This sequence belongs to the universal ribosomal protein uL29 family.

This Glaesserella parasuis serovar 5 (strain SH0165) (Haemophilus parasuis) protein is Large ribosomal subunit protein uL29.